The sequence spans 143 residues: Anti-sigma F factor (143 aa).

This sequence belongs to the anti-sigma-factor family.

The catalysed reaction is L-seryl-[protein] + ATP = O-phospho-L-seryl-[protein] + ADP + H(+). It catalyses the reaction L-threonyl-[protein] + ATP = O-phospho-L-threonyl-[protein] + ADP + H(+). Binds to sigma F and blocks its ability to form an RNA polymerase holoenzyme (E-sigma F). Phosphorylates SpoIIAA on a serine residue. This phosphorylation may enable SpoIIAA to act as an anti-anti-sigma factor that counteracts SpoIIAB and thus releases sigma F from inhibition. The protein is Anti-sigma F factor of Clostridium botulinum (strain Eklund 17B / Type B).